Consider the following 502-residue polypeptide: Glycerol kinase (502 aa).

Position 14 (Thr14) interacts with ADP. Residues Thr14, Thr15, and Ser16 each contribute to the ATP site. A sn-glycerol 3-phosphate-binding site is contributed by Thr14. Arg18 is a binding site for ADP. Residues Arg84, Glu85, Tyr136, and Asp246 each coordinate sn-glycerol 3-phosphate. Arg84, Glu85, Tyr136, Asp246, and Gln247 together coordinate glycerol. ADP is bound by residues Thr268 and Gly311. Residues Thr268, Gly311, Gln315, and Gly412 each coordinate ATP. ADP contacts are provided by Gly412 and Asn416.

This sequence belongs to the FGGY kinase family. Homotetramer and homodimer (in equilibrium). Heterodimer with EIIA-Glc. Binds 1 zinc ion per glycerol kinase EIIA-Glc dimer. The zinc ion is important for dimerization.

The enzyme catalyses glycerol + ATP = sn-glycerol 3-phosphate + ADP + H(+). The protein operates within polyol metabolism; glycerol degradation via glycerol kinase pathway; sn-glycerol 3-phosphate from glycerol: step 1/1. Activity of this regulatory enzyme is affected by several metabolites. Allosterically and non-competitively inhibited by fructose 1,6-bisphosphate (FBP) and unphosphorylated phosphocarrier protein EIIA-Glc (III-Glc), an integral component of the bacterial phosphotransferase (PTS) system. Key enzyme in the regulation of glycerol uptake and metabolism. Catalyzes the phosphorylation of glycerol to yield sn-glycerol 3-phosphate. This Escherichia coli O7:K1 (strain IAI39 / ExPEC) protein is Glycerol kinase.